Consider the following 159-residue polypeptide: 2-C-methyl-D-erythritol 2,4-cyclodiphosphate synthase (159 aa).

A divalent metal cation is bound by residues Asp10 and His12. Residues 10-12 (DVH) and 36-37 (HS) each bind 4-CDP-2-C-methyl-D-erythritol 2-phosphate. An a divalent metal cation-binding site is contributed by His44. 4-CDP-2-C-methyl-D-erythritol 2-phosphate-binding positions include 58–60 (DIG), 63–67 (FSDTD), and Arg144.

The protein belongs to the IspF family. Homotrimer. The cofactor is a divalent metal cation.

It catalyses the reaction 4-CDP-2-C-methyl-D-erythritol 2-phosphate = 2-C-methyl-D-erythritol 2,4-cyclic diphosphate + CMP. It functions in the pathway isoprenoid biosynthesis; isopentenyl diphosphate biosynthesis via DXP pathway; isopentenyl diphosphate from 1-deoxy-D-xylulose 5-phosphate: step 4/6. In terms of biological role, involved in the biosynthesis of isopentenyl diphosphate (IPP) and dimethylallyl diphosphate (DMAPP), two major building blocks of isoprenoid compounds. Catalyzes the conversion of 4-diphosphocytidyl-2-C-methyl-D-erythritol 2-phosphate (CDP-ME2P) to 2-C-methyl-D-erythritol 2,4-cyclodiphosphate (ME-CPP) with a corresponding release of cytidine 5-monophosphate (CMP). This Paraburkholderia xenovorans (strain LB400) protein is 2-C-methyl-D-erythritol 2,4-cyclodiphosphate synthase.